The following is a 231-amino-acid chain: MAPVSIVSRAAMRAAAAPARAVRALTTSTALQGSSSSTFESPFKGESKAAKVPDFGKYMSKAPPSTNMLFSYFMVGTMGAITAAGAKSTIQEFLKNMSASADVLAMAKVEVDLNAIPEGKNVIIKWRGKPVFIRHRTPAEIEEANKVNVATLRDPETDADRVKKPEWLVMLGVCTHLGCVPIGEAGDYGGWFCPCHGSHYDISGRIRKGPAPLNLEIPLYEFPEEGKLVIG.

The transit peptide at 1–24 directs the protein to the mitochondrion; sequence MAPVSIVSRAAMRAAAAPARAVRA. Residues 25 to 32 constitute a propeptide, removed in mature form; it reads LTTSTALQ. The Mitochondrial matrix segment spans residues 33 to 65; sequence GSSSSTFESPFKGESKAAKVPDFGKYMSKAPPS. A helical membrane pass occupies residues 66 to 95; that stretch reads TNMLFSYFMVGTMGAITAAGAKSTIQEFLK. Over 96 to 231 the chain is Mitochondrial intermembrane; sequence NMSASADVLA…FPEEGKLVIG (136 aa). Residues 134–229 form the Rieske domain; sequence RHRTPAEIEE…YEFPEEGKLV (96 aa). The [2Fe-2S] cluster site is built by cysteine 174, histidine 176, cysteine 193, and histidine 196. Residues cysteine 179 and cysteine 195 are joined by a disulfide bond.

This sequence belongs to the Rieske iron-sulfur protein family. As to quaternary structure, component of the ubiquinol-cytochrome c oxidoreductase (cytochrome b-c1 complex, complex III, CIII), a multisubunit enzyme composed of 10 subunits. The complex is composed of 3 respiratory subunits cytochrome b (cob), cytochrome c1 (cyt-1) and Rieske protein (fes-1), 2 core protein subunits pep and ucr-1, and 5 low-molecular weight protein subunits qcr6, qcr7, qcr8, qcr9 and probably NCU16844/qcr10. The complex exists as an obligatory dimer and forms supercomplexes (SCs) in the inner mitochondrial membrane with NADH-ubiquinone oxidoreductase (complex I, CI) and cytochrome c oxidase (complex IV, CIV), resulting in different assemblies (supercomplexes SCI(1)III(2), SCIII(2)IV(1) and SCIII(2)IV(2) as well as higher order I(x)III(y)IV(z) megacomplexes). [2Fe-2S] cluster is required as a cofactor. Post-translationally, processed by both the mitochondrial processing peptidase (MPP) and the mitochondrial intermediate protease (MIP). Initially, MPP removes 25 amino acids from the newly imported precursor in the mitochondrial matrix. This proteolytic processing is then followed by a second proteolytic cleavage by MIP, which removes an octapeptide to generate mature-sized Rieske protein.

Its subcellular location is the mitochondrion inner membrane. The catalysed reaction is a quinol + 2 Fe(III)-[cytochrome c](out) = a quinone + 2 Fe(II)-[cytochrome c](out) + 2 H(+)(out). Component of the ubiquinol-cytochrome c oxidoreductase, a multisubunit transmembrane complex that is part of the mitochondrial electron transport chain which drives oxidative phosphorylation. The respiratory chain contains 3 multisubunit complexes succinate dehydrogenase (complex II, CII), ubiquinol-cytochrome c oxidoreductase (cytochrome b-c1 complex, complex III, CIII) and cytochrome c oxidase (complex IV, CIV), that cooperate to transfer electrons derived from NADH and succinate to molecular oxygen, creating an electrochemical gradient over the inner membrane that drives transmembrane transport and the ATP synthase. The cytochrome b-c1 complex catalyzes electron transfer from ubiquinol to cytochrome c, linking this redox reaction to translocation of protons across the mitochondrial inner membrane, with protons being carried across the membrane as hydrogens on the quinol. In the process called Q cycle, 2 protons are consumed from the matrix, 4 protons are released into the intermembrane space and 2 electrons are passed to cytochrome c. The Rieske protein is a catalytic core subunit containing a [2Fe-2S] iron-sulfur cluster. It cycles between 2 conformational states during catalysis to transfer electrons from the quinol bound in the Q(0) site in cytochrome b to cytochrome c1. The protein is Cytochrome b-c1 complex subunit Rieske, mitochondrial (fes-1) of Neurospora crassa (strain ATCC 24698 / 74-OR23-1A / CBS 708.71 / DSM 1257 / FGSC 987).